We begin with the raw amino-acid sequence, 348 residues long: Dihydroorotase (348 aa).

2 residues coordinate Zn(2+): His-17 and His-19. Substrate is bound by residues 19–21 (HLR) and Asn-45. 3 residues coordinate Zn(2+): Lys-103, His-140, and His-178. Lys-103 carries the post-translational modification N6-carboxylysine. Residue His-140 coordinates substrate. Residue Leu-223 coordinates substrate. Zn(2+) is bound at residue Asp-251. Residue Asp-251 is part of the active site. The substrate site is built by His-255 and Ala-267.

This sequence belongs to the metallo-dependent hydrolases superfamily. DHOase family. Class II DHOase subfamily. Homodimer. The cofactor is Zn(2+).

It catalyses the reaction (S)-dihydroorotate + H2O = N-carbamoyl-L-aspartate + H(+). It participates in pyrimidine metabolism; UMP biosynthesis via de novo pathway; (S)-dihydroorotate from bicarbonate: step 3/3. Functionally, catalyzes the reversible cyclization of carbamoyl aspartate to dihydroorotate. This is Dihydroorotase from Yersinia enterocolitica serotype O:8 / biotype 1B (strain NCTC 13174 / 8081).